The primary structure comprises 331 residues: Small ribosomal subunit protein uS2 (331 aa).

It belongs to the universal ribosomal protein uS2 family.

The polypeptide is Small ribosomal subunit protein uS2 (Rhodopseudomonas palustris (strain BisB5)).